A 1380-amino-acid chain; its full sequence is DNA-directed RNA polymerase subunit beta (1380 aa).

This sequence belongs to the RNA polymerase beta chain family. As to quaternary structure, the RNAP catalytic core consists of 2 alpha, 1 beta, 1 beta' and 1 omega subunit. When a sigma factor is associated with the core the holoenzyme is formed, which can initiate transcription.

It catalyses the reaction RNA(n) + a ribonucleoside 5'-triphosphate = RNA(n+1) + diphosphate. DNA-dependent RNA polymerase catalyzes the transcription of DNA into RNA using the four ribonucleoside triphosphates as substrates. This Rhizobium meliloti (strain 1021) (Ensifer meliloti) protein is DNA-directed RNA polymerase subunit beta.